Here is a 347-residue protein sequence, read N- to C-terminus: Major capsid protein (347 aa).

This sequence belongs to the baculoviridae major capsid protein family.

It is found in the virion. Functionally, most abundant structural protein of the nucleocapsid produced during the infection cycle. The monomers are arranged in stacked rings around the nucleoprotein core. This is Major capsid protein (P39) from Autographa californica nuclear polyhedrosis virus (AcMNPV).